Consider the following 358-residue polypeptide: MNRILIIAGGTGGHIFPALAVARELREQEVDVQWLGVKGGLEEKLVPDSFPLHLIQIKAFRGKRGLQQLLMPLRLVRAVFQAYRIIRQFKPDVILGMGGYVAGPGGLAAWITRTPLIIHEQNSIPGLTNRVLAKMAKFILQGFPDTFPQNRKVITTGNPVRTELVKMPLPQVRLAARRGPLRILVLGGSQGARSINQKMLAALSSYPRSEEIAVWHQTGQRDFEFIQKEYEKIKIEAKVDNFISDMAGAYGWADLVVCRAGALTVCEIASVGVASIFIPYPHAVDNHQFHNARFLEQAGAAIIISEESLTETDLMRWFEQFAQDRDRLLTMAENARKLAKPEAVQRVIAQCKKFYAAR.

Residues Thr11–Gly13, Asn122, Arg161, Ser189, Ile243, Ala262–Glu267, and Gln288 each bind UDP-N-acetyl-alpha-D-glucosamine.

Belongs to the glycosyltransferase 28 family. MurG subfamily.

The protein localises to the cell inner membrane. The enzyme catalyses di-trans,octa-cis-undecaprenyl diphospho-N-acetyl-alpha-D-muramoyl-L-alanyl-D-glutamyl-meso-2,6-diaminopimeloyl-D-alanyl-D-alanine + UDP-N-acetyl-alpha-D-glucosamine = di-trans,octa-cis-undecaprenyl diphospho-[N-acetyl-alpha-D-glucosaminyl-(1-&gt;4)]-N-acetyl-alpha-D-muramoyl-L-alanyl-D-glutamyl-meso-2,6-diaminopimeloyl-D-alanyl-D-alanine + UDP + H(+). Its pathway is cell wall biogenesis; peptidoglycan biosynthesis. Cell wall formation. Catalyzes the transfer of a GlcNAc subunit on undecaprenyl-pyrophosphoryl-MurNAc-pentapeptide (lipid intermediate I) to form undecaprenyl-pyrophosphoryl-MurNAc-(pentapeptide)GlcNAc (lipid intermediate II). The sequence is that of UDP-N-acetylglucosamine--N-acetylmuramyl-(pentapeptide) pyrophosphoryl-undecaprenol N-acetylglucosamine transferase from Coxiella burnetii (strain CbuK_Q154) (Coxiella burnetii (strain Q154)).